A 224-amino-acid chain; its full sequence is Deoxyribose-phosphate aldolase (224 aa).

The Proton donor/acceptor role is filled by Asp-92. Residue Lys-155 is the Schiff-base intermediate with acetaldehyde of the active site. Residue Lys-184 is the Proton donor/acceptor of the active site.

This sequence belongs to the DeoC/FbaB aldolase family. DeoC type 1 subfamily.

The protein localises to the cytoplasm. The enzyme catalyses 2-deoxy-D-ribose 5-phosphate = D-glyceraldehyde 3-phosphate + acetaldehyde. Its pathway is carbohydrate degradation; 2-deoxy-D-ribose 1-phosphate degradation; D-glyceraldehyde 3-phosphate and acetaldehyde from 2-deoxy-alpha-D-ribose 1-phosphate: step 2/2. In terms of biological role, catalyzes a reversible aldol reaction between acetaldehyde and D-glyceraldehyde 3-phosphate to generate 2-deoxy-D-ribose 5-phosphate. This is Deoxyribose-phosphate aldolase from Halalkalibacterium halodurans (strain ATCC BAA-125 / DSM 18197 / FERM 7344 / JCM 9153 / C-125) (Bacillus halodurans).